Consider the following 740-residue polypeptide: Ion-translocating oxidoreductase complex subunit C (740 aa).

4Fe-4S ferredoxin-type domains lie at 369-397 and 407-436; these read GEPQ…QQLY and KATT…VQYF. Cys-377, Cys-380, Cys-383, Cys-387, Cys-416, Cys-419, Cys-422, and Cys-426 together coordinate [4Fe-4S] cluster. A disordered region spans residues 602 to 716; that stretch reads KLEQQQANAE…EPEEQVDPRK (115 aa).

It belongs to the 4Fe4S bacterial-type ferredoxin family. RnfC subfamily. In terms of assembly, the complex is composed of six subunits: RsxA, RsxB, RsxC, RsxD, RsxE and RsxG. [4Fe-4S] cluster is required as a cofactor.

The protein resides in the cell inner membrane. Its function is as follows. Part of a membrane-bound complex that couples electron transfer with translocation of ions across the membrane. Required to maintain the reduced state of SoxR. The polypeptide is Ion-translocating oxidoreductase complex subunit C (Escherichia coli O139:H28 (strain E24377A / ETEC)).